We begin with the raw amino-acid sequence, 163 residues long: Nucleotide-binding protein BBR47_25280 (163 aa).

This sequence belongs to the YajQ family.

Nucleotide-binding protein. The polypeptide is Nucleotide-binding protein BBR47_25280 (Brevibacillus brevis (strain 47 / JCM 6285 / NBRC 100599)).